The primary structure comprises 573 residues: Urease subunit alpha (573 aa).

Ni(2+)-binding residues include histidine 139, histidine 141, and lysine 222. Lysine 222 carries the post-translational modification N6-carboxylysine. Histidine 224 is a binding site for substrate. The Ni(2+) site is built by histidine 251 and histidine 277. Residue histidine 325 is the Proton donor of the active site. Aspartate 365 contributes to the Ni(2+) binding site.

It belongs to the metallo-dependent hydrolases superfamily. Urease alpha subunit family. Heterotrimer of UreA (gamma), UreB (beta) and UreC (alpha) subunits. Three heterotrimers associate to form the active enzyme. Requires Ni cation as cofactor. Carboxylation allows a single lysine to coordinate two nickel ions.

It is found in the cytoplasm. It carries out the reaction urea + 2 H2O + H(+) = hydrogencarbonate + 2 NH4(+). It participates in nitrogen metabolism; urea degradation; CO(2) and NH(3) from urea (urease route): step 1/1. The chain is Urease subunit alpha from Flavobacterium johnsoniae (strain ATCC 17061 / DSM 2064 / JCM 8514 / BCRC 14874 / CCUG 350202 / NBRC 14942 / NCIMB 11054 / UW101) (Cytophaga johnsonae).